The following is a 65-amino-acid chain: Large ribosomal subunit protein uL29 (65 aa).

The protein belongs to the universal ribosomal protein uL29 family.

In Xylella fastidiosa (strain Temecula1 / ATCC 700964), this protein is Large ribosomal subunit protein uL29.